The primary structure comprises 528 residues: GMP synthase [glutamine-hydrolyzing] (528 aa).

Positions alanine 13–aspartate 204 constitute a Glutamine amidotransferase type-1 domain. Catalysis depends on cysteine 90, which acts as the Nucleophile. Active-site residues include histidine 178 and glutamate 180. A GMPS ATP-PPase domain is found at tryptophan 205 to arginine 403. An ATP-binding site is contributed by serine 232 to serine 238.

As to quaternary structure, homodimer.

The enzyme catalyses XMP + L-glutamine + ATP + H2O = GMP + L-glutamate + AMP + diphosphate + 2 H(+). It functions in the pathway purine metabolism; GMP biosynthesis; GMP from XMP (L-Gln route): step 1/1. In terms of biological role, catalyzes the synthesis of GMP from XMP. The polypeptide is GMP synthase [glutamine-hydrolyzing] (Prochlorococcus marinus (strain NATL1A)).